We begin with the raw amino-acid sequence, 191 residues long: Outer membrane lipoprotein DolP (191 aa).

The signal sequence occupies residues Met-1–Gly-18. The N-palmitoyl cysteine moiety is linked to residue Cys-19. Cys-19 carries S-diacylglycerol cysteine lipidation. 2 consecutive BON domains span residues Asp-46–Gln-115 and Asn-124–Lys-191.

It belongs to the lipoprotein DolP family.

It localises to the cell outer membrane. Plays an important role in maintaining outer membrane integrity. Contributes to virulence. This Salmonella typhimurium (strain LT2 / SGSC1412 / ATCC 700720) protein is Outer membrane lipoprotein DolP.